A 248-amino-acid chain; its full sequence is Ras-like protein family member 11B (248 aa).

The interval 29 to 246 is small GTPase-like; that stretch reads AGRRLVKIAV…ALSAKVRTVT (218 aa). GTP contacts are provided by residues 40–47, 87–94, and 152–155; these read GASGVGKT, DTPGIQVH, and NKAD. The segment at 205-226 is disordered; that stretch reads QQPSSTPEKRRTSLIPRPKSPN.

It belongs to the small GTPase superfamily. Ras family. In terms of tissue distribution, widely expressed with highest levels in placenta and primary macrophages.

It carries out the reaction GTP + H2O = GDP + phosphate + H(+). The chain is Ras-like protein family member 11B from Homo sapiens (Human).